The sequence spans 283 residues: Undecaprenyl-diphosphatase (283 aa).

A run of 6 helical transmembrane segments spans residues 47–67 (PGLS…IAYF), 94–114 (LGIA…CIKL), 127–147 (VPAI…AELL), 197–217 (AARF…LVEL), 227–247 (GGVL…WLAI), and 261–281 (IFVV…SGSA).

This sequence belongs to the UppP family.

The protein resides in the cell inner membrane. It catalyses the reaction di-trans,octa-cis-undecaprenyl diphosphate + H2O = di-trans,octa-cis-undecaprenyl phosphate + phosphate + H(+). In terms of biological role, catalyzes the dephosphorylation of undecaprenyl diphosphate (UPP). Confers resistance to bacitracin. In Synechococcus sp. (strain CC9311), this protein is Undecaprenyl-diphosphatase.